The sequence spans 229 residues: Protein-lysine N-methyltransferase EFM4 (229 aa).

This sequence belongs to the class I-like SAM-binding methyltransferase superfamily. EFM4 family.

It is found in the cytoplasm. The enzyme catalyses L-lysyl-[protein] + S-adenosyl-L-methionine = N(6)-methyl-L-lysyl-[protein] + S-adenosyl-L-homocysteine + H(+). The catalysed reaction is N(6)-methyl-L-lysyl-[protein] + S-adenosyl-L-methionine = N(6),N(6)-dimethyl-L-lysyl-[protein] + S-adenosyl-L-homocysteine + H(+). Its function is as follows. S-adenosyl-L-methionine-dependent protein-lysine N-methyltransferase that mono- and dimethylates elongation factor 1-alpha (TEF1 and TEF2) at 'Lys-316'. May play a role in intracellular transport. The protein is Protein-lysine N-methyltransferase EFM4 of Saccharomyces cerevisiae (strain ATCC 204508 / S288c) (Baker's yeast).